Reading from the N-terminus, the 445-residue chain is tRNA modification GTPase MnmE (445 aa).

(6S)-5-formyl-5,6,7,8-tetrahydrofolate-binding residues include arginine 20, glutamate 79, and lysine 119. The 157-residue stretch at 215-371 (GLKLAIIGPP…ILKNIENIAE (157 aa)) folds into the TrmE-type G domain. Asparagine 225 is a K(+) binding site. GTP-binding positions include 225–230 (NVGKSS), 244–250 (SNIAGTT), and 269–272 (DTAG). Serine 229 contributes to the Mg(2+) binding site. 3 residues coordinate K(+): serine 244, isoleucine 246, and threonine 249. Threonine 250 contacts Mg(2+). Lysine 445 contacts (6S)-5-formyl-5,6,7,8-tetrahydrofolate.

It belongs to the TRAFAC class TrmE-Era-EngA-EngB-Septin-like GTPase superfamily. TrmE GTPase family. Homodimer. Heterotetramer of two MnmE and two MnmG subunits. K(+) serves as cofactor.

The protein localises to the cytoplasm. Its function is as follows. Exhibits a very high intrinsic GTPase hydrolysis rate. Involved in the addition of a carboxymethylaminomethyl (cmnm) group at the wobble position (U34) of certain tRNAs, forming tRNA-cmnm(5)s(2)U34. This Rickettsia conorii (strain ATCC VR-613 / Malish 7) protein is tRNA modification GTPase MnmE.